The following is a 908-amino-acid chain: Mycobactin import ATP-binding/permease protein IrtA (908 aa).

Residues 1–329 (MARGFQGVML…SRLLAPLKKP (329 aa)) lie on the Cytoplasmic side of the membrane. An FAD-binding FR-type domain is found at 15–124 (ARDHQATVVD…MGSRGFSVPE (110 aa)). The siderophore interaction domain stretch occupies residues 16 to 245 (RDHQATVVDK…AQAYWTEGRA (230 aa)). Residues 70–73 (RAYT), 87–91 (DMVLH), 97–98 (AS), and 241–243 (TEG) contribute to the FAD site. The disordered stretch occupies residues 245–311 (AMGSSRGETS…GAAQPRTPVR (67 aa)). Residues 253–309 (TSTPAKPAAKTAPAKAAAKPAAASGAGTPEHAAAPAAATTGAPQAAPAPGAAQPRTP) show a composition bias toward low complexity. The chain crosses the membrane as a helical span at residues 330 to 350 (LIVSGVLQALITLIELAPFVL). The ABC transmembrane type-1 domain maps to 331-613 (IVSGVLQALI…IGYGLSGIQT (283 aa)). Over 351–371 (LVELARLLLGGAEAERLWTLG) the chain is Periplasmic. Residues 372-392 (LTAVSLIGLGAVLAAAMTLWL) form a helical membrane-spanning segment. Topologically, residues 393–444 (HRVDARFAHELRGRLLTKLSRLPLGWFTRRGSASTKQLVQDDTLALHYLITH) are cytoplasmic. The helical transmembrane segment at 445–465 (AIPDAVAAVVAPVAVLVYLFV) threads the bilayer. At 466–469 (ADWR) the chain is on the periplasmic side. A helical transmembrane segment spans residues 470–490 (VALVLFIPVLVYLVLMSVMTI). Over 491 to 557 (QSGSKIAQAP…PFVGKKTLMD (67 aa)) the chain is Cytoplasmic. A helical membrane pass occupies residues 558 to 578 (LVTRPATFLWIILVAGVPLVV). Residues 579 to 586 (TGRMDPVN) lie on the Periplasmic side of the membrane. The helical transmembrane segment at 587–607 (LLPFLLLGTTFGARLLGIGYG) threads the bilayer. The Cytoplasmic segment spans residues 608–908 (LSGIQTGMLA…VSADAVEVGR (301 aa)). Residues 654-887 (VELDRVSFEY…GGRYRGLWDS (234 aa)) form the ABC transporter domain. 687-694 (GPSGSGKS) provides a ligand contact to ATP.

It belongs to the ABC transporter superfamily. Siderophore-Fe(3+) uptake transporter (SIUT) (TC 3.A.1.21) family. Forms a heterodimer with IrtB. It depends on FAD as a cofactor.

It is found in the cell inner membrane. With respect to regulation, the ATPase activity of IrtAB is stimulated more than 38-fold in the presence of Fe-MBT, and more than 10-fold in the presence of Fe-cMBT. Functionally, part of the ABC transporter complex IrtAB involved in the import of iron-bound mycobactin (Fe-MBT) and carboxymycobactin (Fe-cMBT). Has a preference for Fe-MBT over Fe-cMBT. Mycobactins are then reduced by the siderophore interaction domain to facilitate iron release in the bacterial cell. Transmembrane domains (TMD) form a pore in the membrane and the ATP-binding domain (NBD) is responsible for energy generation. This chain is Mycobactin import ATP-binding/permease protein IrtA, found in Mycolicibacterium thermoresistibile (strain ATCC 19527 / DSM 44167 / CIP 105390 / JCM 6362 / NCTC 10409 / 316) (Mycobacterium thermoresistibile).